The following is a 70-amino-acid chain: Sec-independent protein translocase protein TatA (70 aa).

The chain crosses the membrane as a helical span at residues 1–21 (MGSFSIWHWLIVLVVVALLFG). The disordered stretch occupies residues 45-70 (KGESEQAEDETAKPLPKERDKDSARG).

Belongs to the TatA/E family. In terms of assembly, the Tat system comprises two distinct complexes: a TatABC complex, containing multiple copies of TatA, TatB and TatC subunits, and a separate TatA complex, containing only TatA subunits. Substrates initially bind to the TatABC complex, which probably triggers association of the separate TatA complex to form the active translocon.

It localises to the cell inner membrane. Its function is as follows. Part of the twin-arginine translocation (Tat) system that transports large folded proteins containing a characteristic twin-arginine motif in their signal peptide across membranes. TatA could form the protein-conducting channel of the Tat system. This Phenylobacterium zucineum (strain HLK1) protein is Sec-independent protein translocase protein TatA.